We begin with the raw amino-acid sequence, 372 residues long: tRNA-specific 2-thiouridylase MnmA (372 aa).

Residues 16 to 23 (GMSGGVDS) and methionine 42 contribute to the ATP site. The interval 102 to 104 (NPD) is interaction with target base in tRNA. The Nucleophile role is filled by cysteine 107. Cysteine 107 and cysteine 205 form a disulfide bridge. Glycine 132 is a binding site for ATP. Residues 155-157 (KDQ) are interaction with tRNA. Residue cysteine 205 is the Cysteine persulfide intermediate of the active site. The interval 317 to 318 (RY) is interaction with tRNA.

This sequence belongs to the MnmA/TRMU family.

It is found in the cytoplasm. The enzyme catalyses S-sulfanyl-L-cysteinyl-[protein] + uridine(34) in tRNA + AH2 + ATP = 2-thiouridine(34) in tRNA + L-cysteinyl-[protein] + A + AMP + diphosphate + H(+). Its function is as follows. Catalyzes the 2-thiolation of uridine at the wobble position (U34) of tRNA, leading to the formation of s(2)U34. The chain is tRNA-specific 2-thiouridylase MnmA from Shewanella baltica (strain OS185).